Here is a 262-residue protein sequence, read N- to C-terminus: 5'-nucleotidase SurE (262 aa).

Positions 8, 9, 40, and 92 each coordinate a divalent metal cation.

Belongs to the SurE nucleotidase family. Requires a divalent metal cation as cofactor.

It is found in the cytoplasm. It carries out the reaction a ribonucleoside 5'-phosphate + H2O = a ribonucleoside + phosphate. Functionally, nucleotidase that shows phosphatase activity on nucleoside 5'-monophosphates. This is 5'-nucleotidase SurE from Xylella fastidiosa (strain M23).